The following is a 448-amino-acid chain: Probable glycine dehydrogenase (decarboxylating) subunit 1 (448 aa).

Belongs to the GcvP family. N-terminal subunit subfamily. In terms of assembly, the glycine cleavage system is composed of four proteins: P, T, L and H. In this organism, the P 'protein' is a heterodimer of two subunits.

The catalysed reaction is N(6)-[(R)-lipoyl]-L-lysyl-[glycine-cleavage complex H protein] + glycine + H(+) = N(6)-[(R)-S(8)-aminomethyldihydrolipoyl]-L-lysyl-[glycine-cleavage complex H protein] + CO2. In terms of biological role, the glycine cleavage system catalyzes the degradation of glycine. The P protein binds the alpha-amino group of glycine through its pyridoxal phosphate cofactor; CO(2) is released and the remaining methylamine moiety is then transferred to the lipoamide cofactor of the H protein. The protein is Probable glycine dehydrogenase (decarboxylating) subunit 1 of Bacillus velezensis (strain DSM 23117 / BGSC 10A6 / LMG 26770 / FZB42) (Bacillus amyloliquefaciens subsp. plantarum).